Consider the following 418-residue polypeptide: Putative O-antigen transporter (418 aa).

The next 11 membrane-spanning stretches (helical) occupy residues 8–28 (VWNL…LGFL), 37–57 (FGVY…DVGL), 85–105 (FLVL…DGIV), 124–144 (LLAI…ILEG), 165–185 (IPAI…GLIF), 217–237 (LFFF…MVYF), 251–271 (VAFY…PAAI), 297–317 (LLMF…SGLV), 334–354 (LNVL…FSAI), 362–382 (ITAL…YFMV), and 385–405 (YGLL…ALLL).

It belongs to the polysaccharide synthase family.

The protein localises to the cell inner membrane. It participates in bacterial outer membrane biogenesis; lipopolysaccharide biosynthesis. Could be an O-antigen transporter. This chain is Putative O-antigen transporter (rfbE), found in Shigella flexneri.